Reading from the N-terminus, the 432-residue chain is Keratin, type I cytoskeletal 17 (432 aa).

The disordered stretch occupies residues 1–24; the sequence is MTTTIRQFTSSSSIKGSSGLGGGS. The segment at 1-83 is head; that stretch reads MTTTIRQFTS…GGVDGLLAGG (83 aa). Phosphoserine occurs at positions 12 and 13. Residue Lys-15 forms a Glycyl lysine isopeptide (Lys-Gly) (interchain with G-Cter in SUMO1); alternate linkage. A Glycyl lysine isopeptide (Lys-Gly) (interchain with G-Cter in SUMO2); alternate cross-link involves residue Lys-15. 3 positions are modified to phosphoserine: Ser-25, Ser-32, and Ser-39. At Ser-44 the chain carries Phosphoserine; by RPS6KA1. The interval 84 to 120 is coil 1A; that stretch reads EKATMQNLNDRLASYLDKVRALEEANTELEVKIRDWY. Residues 84–395 enclose the IF rod domain; the sequence is EKATMQNLND…RLLEGEDAHL (312 aa). Position 110 is a phosphothreonine (Thr-110). The tract at residues 121–138 is linker 1; that stretch reads QRQAPGPARDYSQYYRTI. Residues 139 to 230 form a coil 1B region; sequence EELQNKILTA…NHEEEMNALR (92 aa). Residues 231-250 form a linker 12 region; it reads GQVGGEINVEMDAAPGVDLS. The tract at residues 251 to 392 is coil 2; the sequence is RILNEMRDQY…TYRRLLEGED (142 aa). Lys-278 is covalently cross-linked (Glycyl lysine isopeptide (Lys-Gly) (interchain with G-Cter in SUMO2)). Phosphothreonine is present on Thr-279. Ser-323 carries the phosphoserine modification. The interval 393–432 is tail; the sequence is AHLTQYKKEPVTTRQVRTIVEEVQDGKVISSREQVHQTTR. Glycyl lysine isopeptide (Lys-Gly) (interchain with G-Cter in SUMO1); alternate cross-links involve residues Lys-399, Lys-400, and Lys-419. Glycyl lysine isopeptide (Lys-Gly) (interchain with G-Cter in SUMO2); alternate cross-links involve residues Lys-399, Lys-400, and Lys-419.

This sequence belongs to the intermediate filament family. In terms of assembly, heterodimer of a type I and a type II keratin. KRT17 associates with KRT6 isomers (KRT6A or KRT6B). Interacts with TRADD and SFN. Phosphorylation at Ser-44 occurs in a growth- and stress-dependent fashion in skin keratinocytes, it has no effect on filament organization.

It is found in the cytoplasm. Functionally, type I keratin involved in the formation and maintenance of various skin appendages, specifically in determining shape and orientation of hair. Required for the correct growth of hair follicles, in particular for the persistence of the anagen (growth) state. Modulates the function of TNF-alpha in the specific context of hair cycling. Regulates protein synthesis and epithelial cell growth through binding to the adapter protein SFN and by stimulating Akt/mTOR pathway. Involved in tissue repair. May be a marker of basal cell differentiation in complex epithelia and therefore indicative of a certain type of epithelial 'stem cells'. Acts as a promoter of epithelial proliferation by acting a regulator of immune response in skin: promotes Th1/Th17-dominated immune environment contributing to the development of basaloid skin tumors. May act as an autoantigen in the immunopathogenesis of psoriasis, with certain peptide regions being a major target for autoreactive T-cells and hence causing their proliferation. The protein is Keratin, type I cytoskeletal 17 of Pan troglodytes (Chimpanzee).